A 333-amino-acid polypeptide reads, in one-letter code: Foldase protein PrsA (333 aa).

Residues 1–22 (MKKSTKLLAGIVTLASAMTLAA) form the signal peptide. Cys-23 carries the N-palmitoyl cysteine lipid modification. Cys-23 carries the S-diacylglycerol cysteine lipid modification. The PpiC domain maps to 145-240 (TPEMTTQVIT…NKFYIVKVTK (96 aa)). The segment at 301 to 333 (DKKASKANTSKSDQKTSSDSSKDSQSSKSKSEK) is disordered. A compositionally biased stretch (basic and acidic residues) spans 312 to 322 (SDQKTSSDSSK). A compositionally biased stretch (low complexity) spans 323–333 (DSQSSKSKSEK).

The protein belongs to the PrsA family.

It localises to the cell membrane. The catalysed reaction is [protein]-peptidylproline (omega=180) = [protein]-peptidylproline (omega=0). Its function is as follows. Plays a major role in protein secretion by helping the post-translocational extracellular folding of several secreted proteins. This chain is Foldase protein PrsA, found in Streptococcus equi subsp. zooepidemicus (strain H70).